The chain runs to 101 residues: UPF0235 protein MMP1055 (101 aa).

It belongs to the UPF0235 family.

This chain is UPF0235 protein MMP1055, found in Methanococcus maripaludis (strain DSM 14266 / JCM 13030 / NBRC 101832 / S2 / LL).